We begin with the raw amino-acid sequence, 140 residues long: Protein NrdI (140 aa).

The protein belongs to the NrdI family.

Probably involved in ribonucleotide reductase function. The protein is Protein NrdI of Photorhabdus laumondii subsp. laumondii (strain DSM 15139 / CIP 105565 / TT01) (Photorhabdus luminescens subsp. laumondii).